A 354-amino-acid polypeptide reads, in one-letter code: Ornithine carbamoyltransferase, catabolic (354 aa).

Carbamoyl phosphate is bound by residues 67–70 (STRT), glutamine 94, arginine 118, and 145–148 (HPTQ). L-ornithine contacts are provided by residues asparagine 177, aspartate 241, and 245–246 (SM). Residues 284–285 (CL) and arginine 329 each bind carbamoyl phosphate.

It belongs to the aspartate/ornithine carbamoyltransferase superfamily. OTCase family.

It is found in the cytoplasm. The enzyme catalyses carbamoyl phosphate + L-ornithine = L-citrulline + phosphate + H(+). The protein operates within amino-acid degradation; L-arginine degradation via ADI pathway; carbamoyl phosphate from L-arginine: step 2/2. Its function is as follows. Reversibly catalyzes the transfer of the carbamoyl group from carbamoyl phosphate (CP) to the N(epsilon) atom of ornithine (ORN) to produce L-citrulline. The polypeptide is Ornithine carbamoyltransferase, catabolic (arcB) (Lactococcus lactis subsp. cremoris (Streptococcus cremoris)).